The chain runs to 229 residues: Cytidylate kinase (229 aa).

ATP is bound at residue Gly12–Thr20.

This sequence belongs to the cytidylate kinase family. Type 1 subfamily.

The protein resides in the cytoplasm. It carries out the reaction CMP + ATP = CDP + ADP. The catalysed reaction is dCMP + ATP = dCDP + ADP. This is Cytidylate kinase from Pseudomonas syringae pv. syringae (strain B728a).